Here is a 334-residue protein sequence, read N- to C-terminus: GTP 3',8-cyclase (334 aa).

The region spanning 8–244 is the Radical SAM core domain; that stretch reads RYGRPLRDLR…GEVAQRHAFA (237 aa). Arginine 17 is a binding site for GTP. Cysteine 24 and cysteine 28 together coordinate [4Fe-4S] cluster. S-adenosyl-L-methionine is bound at residue tyrosine 30. A [4Fe-4S] cluster-binding site is contributed by cysteine 31. Arginine 70 is a binding site for GTP. Residue glycine 74 participates in S-adenosyl-L-methionine binding. Threonine 101 lines the GTP pocket. Serine 125 contributes to the S-adenosyl-L-methionine binding site. Residue lysine 163 coordinates GTP. Residue methionine 197 participates in S-adenosyl-L-methionine binding. Residues cysteine 261 and cysteine 264 each coordinate [4Fe-4S] cluster. 266–268 contacts GTP; that stretch reads RAR. Cysteine 278 is a binding site for [4Fe-4S] cluster.

It belongs to the radical SAM superfamily. MoaA family. In terms of assembly, monomer and homodimer. [4Fe-4S] cluster is required as a cofactor.

It carries out the reaction GTP + AH2 + S-adenosyl-L-methionine = (8S)-3',8-cyclo-7,8-dihydroguanosine 5'-triphosphate + 5'-deoxyadenosine + L-methionine + A + H(+). Its pathway is cofactor biosynthesis; molybdopterin biosynthesis. In terms of biological role, catalyzes the cyclization of GTP to (8S)-3',8-cyclo-7,8-dihydroguanosine 5'-triphosphate. This chain is GTP 3',8-cyclase, found in Xanthomonas axonopodis pv. citri (strain 306).